We begin with the raw amino-acid sequence, 355 residues long: Erythronate-4-phosphate dehydrogenase (355 aa).

Positions 45 and 66 each coordinate substrate. NAD(+) is bound at residue Asp146. Arg206 is a catalytic residue. Asp229 is a binding site for NAD(+). Glu234 is an active-site residue. His251 acts as the Proton donor in catalysis. Gly254 provides a ligand contact to NAD(+). Tyr255 is a binding site for substrate.

Belongs to the D-isomer specific 2-hydroxyacid dehydrogenase family. PdxB subfamily. Homodimer.

It is found in the cytoplasm. It catalyses the reaction 4-phospho-D-erythronate + NAD(+) = (R)-3-hydroxy-2-oxo-4-phosphooxybutanoate + NADH + H(+). Its pathway is cofactor biosynthesis; pyridoxine 5'-phosphate biosynthesis; pyridoxine 5'-phosphate from D-erythrose 4-phosphate: step 2/5. Catalyzes the oxidation of erythronate-4-phosphate to 3-hydroxy-2-oxo-4-phosphonooxybutanoate. The polypeptide is Erythronate-4-phosphate dehydrogenase (Acinetobacter baumannii (strain SDF)).